The following is a 245-amino-acid chain: Transmembrane and ubiquitin-like domain-containing protein 1 (245 aa).

The tract at residues 2–30 (ALIEGVGDEVTVLFAVLACLLVLALAWVS) is required to release iHOPS from membranes. A helical transmembrane segment spans residues 11–31 (VTVLFAVLACLLVLALAWVST). Residues 33–100 (TTESTDPQPQ…ASTPPDSPQE (68 aa)) form a disordered region. A phosphoserine mark is found at Ser-73, Ser-97, and Ser-126. The region spanning 102–175 (LLLRLKFLND…LHCHVSTRVG (74 aa)) is the Ubiquitin-like domain. The next 2 membrane-spanning stretches (helical) occupy residues 194 to 214 (IGSL…YCQI) and 219 to 239 (FFPL…SLLA).

Interacts with EEF1A1, CAMLG, GRIA2 and GRIP1. Interacts with NPM1 and CDKN2A; TMUB1 can enhance interaction between NPM1 and CDKN2A and is proposed to bridge the proteins; proposed to be mediated by iHOPS. Interacts with TUBG1. Interacts with ERLIN2 and AMFR; TMUB1 promotes the interaction of ERLIN2 with AMFR. In terms of processing, isoform 1 (lHOPS) is processed by regulated intramembrane proteolysis (RIP) in the N-terminus to release iHOPS from membranes. Post-translationally, isoform 2 seems to undergo a selective cleavage in the C-terminal region to release an additional cytoplasmic form. As to expression, expressed in adult brain; at protein level. Isoform 1 (lHOPS) is highly expressed in small intestine, stomach and epididymis. Isoform 2 (sHOPS) and iHOPS are abundantly expressed in brain, liver and adrenal gland.

Its subcellular location is the membrane. The protein localises to the postsynaptic cell membrane. It localises to the recycling endosome. It is found in the cytoplasm. The protein resides in the nucleus. Its subcellular location is the nucleolus. The protein localises to the cytoskeleton. It localises to the microtubule organizing center. It is found in the centrosome. Involved in sterol-regulated ubiquitination and degradation of HMG-CoA reductase HMGCR. Involved in positive regulation of AMPA-selective glutamate receptor GRIA2 recycling to the cell surface. Acts as a negative regulator of hepatocyte growth during regeneration. Functionally, may contribute to the regulation of translation during cell-cycle progression. May contribute to the regulation of cell proliferation. May be involved in centrosome assembly. Modulates stabilization and nucleolar localization of tumor suppressor CDKN2A and enhances association between CDKN2A and NPM1. In Mus musculus (Mouse), this protein is Transmembrane and ubiquitin-like domain-containing protein 1 (Tmub1).